Consider the following 359-residue polypeptide: Phospho-N-acetylmuramoyl-pentapeptide-transferase (359 aa).

Transmembrane regions (helical) follow at residues Phe24–Phe44, Phe72–Leu92, Thr100–Val120, Met134–Ile154, Leu170–Asn190, Gly197–Ala217, Ala234–Phe254, Met261–Met281, Ile289–Phe309, and Lys336–Leu356.

This sequence belongs to the glycosyltransferase 4 family. MraY subfamily. It depends on Mg(2+) as a cofactor.

The protein resides in the cell inner membrane. The catalysed reaction is UDP-N-acetyl-alpha-D-muramoyl-L-alanyl-gamma-D-glutamyl-meso-2,6-diaminopimeloyl-D-alanyl-D-alanine + di-trans,octa-cis-undecaprenyl phosphate = di-trans,octa-cis-undecaprenyl diphospho-N-acetyl-alpha-D-muramoyl-L-alanyl-D-glutamyl-meso-2,6-diaminopimeloyl-D-alanyl-D-alanine + UMP. Its pathway is cell wall biogenesis; peptidoglycan biosynthesis. Its function is as follows. Catalyzes the initial step of the lipid cycle reactions in the biosynthesis of the cell wall peptidoglycan: transfers peptidoglycan precursor phospho-MurNAc-pentapeptide from UDP-MurNAc-pentapeptide onto the lipid carrier undecaprenyl phosphate, yielding undecaprenyl-pyrophosphoryl-MurNAc-pentapeptide, known as lipid I. In Hydrogenobaculum sp. (strain Y04AAS1), this protein is Phospho-N-acetylmuramoyl-pentapeptide-transferase.